The sequence spans 263 residues: Glutamate racemase (263 aa).

Residues 13-14 and 45-46 contribute to the substrate site; these read DS and YG. Cysteine 77 functions as the Proton donor/acceptor in the catalytic mechanism. Position 78–79 (78–79) interacts with substrate; the sequence is NT. The Proton donor/acceptor role is filled by cysteine 185. 186–187 contacts substrate; it reads TH.

The protein belongs to the aspartate/glutamate racemases family.

The enzyme catalyses L-glutamate = D-glutamate. It participates in cell wall biogenesis; peptidoglycan biosynthesis. In terms of biological role, provides the (R)-glutamate required for cell wall biosynthesis. The chain is Glutamate racemase from Vibrio vulnificus (strain CMCP6).